The chain runs to 573 residues: Ascochitine biosynthesis cluster transcriptional regulator (573 aa).

Its subcellular location is the nucleus. Its function is as follows. Transcription factor that regulates the expression of the gene cluster that mediates the biosynthesis of the mycotoxin ascochitine, an o-quinone methide that plays a possible protective role against other microbial competitors in nature and is considered to be important for pathogenicity of legume-associated Didymella species. The sequence is that of Ascochitine biosynthesis cluster transcriptional regulator from Didymella fabae (Leaf and pod spot disease fungus).